A 75-amino-acid polypeptide reads, in one-letter code: Large ribosomal subunit protein bL31c (75 aa).

Belongs to the bacterial ribosomal protein bL31 family. Type A subfamily. As to quaternary structure, part of the 50S ribosomal subunit.

The protein resides in the plastid. Its subcellular location is the chloroplast. Its function is as follows. Binds the 23S rRNA. This chain is Large ribosomal subunit protein bL31c, found in Cyanidium caldarium (Red alga).